The primary structure comprises 162 residues: Disulfide bond formation protein B (162 aa).

Residues 1–8 are Cytoplasmic-facing; it reads MTPLFRKA. A helical transmembrane segment spans residues 9–25; that stretch reads VWLLFAVSVCAFAGSLA. The Periplasmic portion of the chain corresponds to 26-43; that stretch reads AQYVLGMEPCVLCISQRL. An intrachain disulfide couples Cys35 to Cys38. A helical membrane pass occupies residues 44 to 60; it reads CVLATALCAAIVLMCRP. Residues 61 to 67 lie on the Cytoplasmic side of the membrane; the sequence is RRKAGGL. The chain crosses the membrane as a helical span at residues 68-85; it reads FGAVFISIPAVTGISVAA. At 86 to 141 the chain is on the periplasmic side; the sequence is YQLWLQSLPPGTAPSCGAPWTFRLKGWPLFDWFEPVVRGFGNCAEPDYLLGVALPV. Cys101 and Cys128 are joined by a disulfide. A helical transmembrane segment spans residues 142 to 160; it reads WSVAYFLAVALTVWWAWAR. At 161 to 162 the chain is on the cytoplasmic side; that stretch reads AK.

This sequence belongs to the DsbB family.

It localises to the cell inner membrane. In terms of biological role, required for disulfide bond formation in some periplasmic proteins. Acts by oxidizing the DsbA protein. The chain is Disulfide bond formation protein B from Neisseria meningitidis serogroup A / serotype 4A (strain DSM 15465 / Z2491).